We begin with the raw amino-acid sequence, 269 residues long: Formamidopyrimidine-DNA glycosylase (269 aa).

The active-site Schiff-base intermediate with DNA is the proline 2. Glutamate 3 serves as the catalytic Proton donor. The Proton donor; for beta-elimination activity role is filled by lysine 57. Positions 90, 109, and 150 each coordinate DNA. An FPG-type zinc finger spans residues 235 to 269; the sequence is QVYGRKGEPCRVCGTPIVATKHAQRATFYCRHCQK. Catalysis depends on arginine 259, which acts as the Proton donor; for delta-elimination activity.

The protein belongs to the FPG family. In terms of assembly, monomer. Zn(2+) is required as a cofactor.

It carries out the reaction Hydrolysis of DNA containing ring-opened 7-methylguanine residues, releasing 2,6-diamino-4-hydroxy-5-(N-methyl)formamidopyrimidine.. The catalysed reaction is 2'-deoxyribonucleotide-(2'-deoxyribose 5'-phosphate)-2'-deoxyribonucleotide-DNA = a 3'-end 2'-deoxyribonucleotide-(2,3-dehydro-2,3-deoxyribose 5'-phosphate)-DNA + a 5'-end 5'-phospho-2'-deoxyribonucleoside-DNA + H(+). In terms of biological role, involved in base excision repair of DNA damaged by oxidation or by mutagenic agents. Acts as a DNA glycosylase that recognizes and removes damaged bases. Has a preference for oxidized purines, such as 7,8-dihydro-8-oxoguanine (8-oxoG). Has AP (apurinic/apyrimidinic) lyase activity and introduces nicks in the DNA strand. Cleaves the DNA backbone by beta-delta elimination to generate a single-strand break at the site of the removed base with both 3'- and 5'-phosphates. In Salmonella agona (strain SL483), this protein is Formamidopyrimidine-DNA glycosylase.